Consider the following 1384-residue polypeptide: Hepatocyte growth factor receptor (1384 aa).

A signal peptide spans 1-24 (MKAPAVLAPGILVLLFTFVQKSNG). The Extracellular segment spans residues 25–933 (ECKEALVKSR…VIVQPDQNFT (909 aa)). Residues 27–516 (KEALVKSRMN…TGKKITKIPL (490 aa)) enclose the Sema domain. Asn-45 is a glycosylation site (N-linked (GlcNAc...) asparagine). Cystine bridges form between Cys-95–Cys-101, Cys-98–Cys-160, Cys-133–Cys-141, and Cys-173–Cys-176. Residue Asn-106 is glycosylated (N-linked (GlcNAc...) asparagine). An N-linked (GlcNAc...) asparagine glycan is attached at Asn-149. N-linked (GlcNAc...) asparagine glycans are attached at residues Asn-203 and Asn-359. 2 cysteine pairs are disulfide-bonded: Cys-299/Cys-364 and Cys-386/Cys-398. N-linked (GlcNAc...) asparagine glycosylation is found at Asn-400 and Asn-406. Intrachain disulfides connect Cys-521-Cys-539, Cys-527-Cys-562, Cys-530-Cys-546, and Cys-542-Cys-552. 3 IPT/TIG domains span residues 564–656 (PTIY…FSYV), 658–740 (PIIT…FIYR), and 743–837 (PIVY…LIYV). O-linked (Man) threonine glycosylation is present at Thr-583. N-linked (GlcNAc...) asparagine glycosylation is found at Asn-608 and Asn-636. O-linked (Man) threonine glycans are attached at residues Thr-677 and Thr-762. Asn-786, Asn-880, and Asn-931 each carry an N-linked (GlcNAc...) asparagine glycan. Residues 934 to 956 (GLIVGVVSVSIILLLLLGLFLWL) form a helical membrane-spanning segment. Residues 957-1384 (KKRKQIKDLG…NVSGEDDDDT (428 aa)) are Cytoplasmic-facing. Residue Ser-967 is modified to Phosphoserine. At Thr-978 the chain carries Phosphothreonine. Ser-991, Ser-998, and Ser-1001 each carry phosphoserine. At Tyr-1004 the chain carries Phosphotyrosine. The 268-residue stretch at 1079–1346 (VHFNEVIGRG…RIAAIFSAFI (268 aa)) folds into the Protein kinase domain. Residues 1085-1093 (IGRGHFGCV) and Lys-1111 each bind ATP. Catalysis depends on Asp-1205, which acts as the Proton acceptor. Residues 1213–1382 (LDEKFTVKVA…QENVSGEDDD (170 aa)) form an interaction with RANBP9 region. At Tyr-1231 the chain carries Phosphotyrosine. 2 positions are modified to phosphotyrosine; by autocatalysis: Tyr-1235 and Tyr-1236. Residue Thr-1290 is modified to Phosphothreonine. Positions 1321–1360 (WHPKAELRPSFSELVSRIAAIFSAFIGEHYVHVNATYVNV) are interaction with MUC20. Phosphotyrosine; by autocatalysis occurs at positions 1350 and 1357. Tyr-1366 bears the Phosphotyrosine mark.

The protein belongs to the protein kinase superfamily. Tyr protein kinase family. Heterodimer made of an alpha chain (50 kDa) and a beta chain (145 kDa) which are disulfide linked. Binds PLXNB1. Interacts when phosphorylated with downstream effectors including STAT3, PIK3R1, SRC, PCLG1, GRB2 and GAB1. Interacts with SPSB1, SPSB2 and SPSB4. Interacts with INPP5D/SHIP1. When phosphorylated at Tyr-1357, interacts with INPPL1/SHIP2. Interacts with RANBP9 and RANBP10, as well as SPSB1, SPSB2, SPSB3 and SPSB4. SPSB1 binding occurs in the presence and in the absence of HGF, however HGF treatment has a positive effect on this interaction. Interacts with MUC20; prevents interaction with GRB2 and suppresses hepatocyte growth factor-induced cell proliferation. Interacts with GRB10. Interacts with PTPN1 and PTPN2. Interacts with HSP90AA1 and HSP90AB1; the interaction suppresses MET kinase activity. Interacts with tensin TNS3. Interacts (when phosphorylated) with tensin TNS4 (via SH2 domain); the interaction increases MET protein stability by inhibiting MET endocytosis and subsequent lysosomal degradation. In terms of processing, autophosphorylated in response to ligand binding on Tyr-1235 and Tyr-1236 in the kinase domain leading to further phosphorylation of Tyr-1350 and Tyr-1357 in the C-terminal multifunctional docking site. Dephosphorylated by PTPRJ at Tyr-1350 and Tyr-1366. Dephosphorylated by PTPN1 and PTPN2. Post-translationally, ubiquitinated. Ubiquitination by CBL regulates the receptor stability and activity through proteasomal degradation. O-mannosylation of IPT/TIG domains by TMEM260 is required for protein maturation. O-mannosylated residues are composed of single mannose glycans that are not elongated or modified.

Its subcellular location is the membrane. The catalysed reaction is L-tyrosyl-[protein] + ATP = O-phospho-L-tyrosyl-[protein] + ADP + H(+). Its activity is regulated as follows. In its inactive state, the C-terminal tail interacts with the catalytic domain and inhibits the kinase activity. Upon ligand binding, the C-terminal tail is displaced and becomes phosphorylated, thus increasing the kinase activity. Receptor tyrosine kinase that transduces signals from the extracellular matrix into the cytoplasm by binding to hepatocyte growth factor/HGF ligand. Regulates many physiological processes including proliferation, scattering, morphogenesis and survival. Ligand binding at the cell surface induces autophosphorylation of MET on its intracellular domain that provides docking sites for downstream signaling molecules. Following activation by ligand, interacts with the PI3-kinase subunit PIK3R1, PLCG1, SRC, GRB2, STAT3 or the adapter GAB1. Recruitment of these downstream effectors by MET leads to the activation of several signaling cascades including the RAS-ERK, PI3 kinase-AKT, or PLCgamma-PKC. The RAS-ERK activation is associated with the morphogenetic effects while PI3K/AKT coordinates prosurvival effects. During embryonic development, MET signaling plays a role in gastrulation, development and migration of muscles and neuronal precursors, angiogenesis and kidney formation. In adults, participates in wound healing as well as organ regeneration and tissue remodeling. Also promotes differentiation and proliferation of hematopoietic cells. This chain is Hepatocyte growth factor receptor (MET), found in Ovis aries (Sheep).